A 172-amino-acid chain; its full sequence is Nucleoside-triphosphatase THEP1 (172 aa).

Residues 11-18 (GKPGIGKT) and 101-108 (IILIDEIG) each bind ATP.

The protein belongs to the THEP1 NTPase family.

The catalysed reaction is a ribonucleoside 5'-triphosphate + H2O = a ribonucleoside 5'-diphosphate + phosphate + H(+). Functionally, has nucleotide phosphatase activity towards ATP, GTP, CTP, TTP and UTP. May hydrolyze nucleoside diphosphates with lower efficiency. In Sulfolobus acidocaldarius (strain ATCC 33909 / DSM 639 / JCM 8929 / NBRC 15157 / NCIMB 11770), this protein is Nucleoside-triphosphatase THEP1.